Consider the following 297-residue polypeptide: Aspartate carbamoyltransferase catalytic subunit (297 aa).

Carbamoyl phosphate is bound by residues Arg51 and Thr52. L-aspartate is bound at residue Lys79. Carbamoyl phosphate contacts are provided by Arg101, His129, and Gln132. Residues Arg162 and Arg216 each contribute to the L-aspartate site. 2 residues coordinate carbamoyl phosphate: Gly257 and Pro258.

Belongs to the aspartate/ornithine carbamoyltransferase superfamily. ATCase family. In terms of assembly, heterododecamer (2C3:3R2) of six catalytic PyrB chains organized as two trimers (C3), and six regulatory PyrI chains organized as three dimers (R2).

The catalysed reaction is carbamoyl phosphate + L-aspartate = N-carbamoyl-L-aspartate + phosphate + H(+). The protein operates within pyrimidine metabolism; UMP biosynthesis via de novo pathway; (S)-dihydroorotate from bicarbonate: step 2/3. Catalyzes the condensation of carbamoyl phosphate and aspartate to form carbamoyl aspartate and inorganic phosphate, the committed step in the de novo pyrimidine nucleotide biosynthesis pathway. This chain is Aspartate carbamoyltransferase catalytic subunit, found in Myxococcus xanthus (strain DK1622).